A 626-amino-acid chain; its full sequence is Chaperone protein HtpG (626 aa).

The interval 1 to 339 (MSTNQETRGF…SNDLPLNVSR (339 aa)) is a; substrate-binding. The b stretch occupies residues 340 to 555 (EILQDNKVTA…NDQMTTQMAK (216 aa)). The tract at residues 556 to 626 (LFAAAGQPVP…FIKRVNSLLS (71 aa)) is c.

Belongs to the heat shock protein 90 family. Homodimer.

It is found in the cytoplasm. Its function is as follows. Molecular chaperone. Has ATPase activity. The polypeptide is Chaperone protein HtpG (Histophilus somni (strain 129Pt) (Haemophilus somnus)).